The primary structure comprises 497 residues: L-asparagine permease (497 aa).

Transmembrane regions (helical) follow at residues 34–54, 58–78, 109–129, 146–166, 171–191, 219–239, 264–284, 298–318, 353–373, 378–398, 422–442, and 448–468; these read QVQM…GAGA, MAGP…FFIL, VAGW…ITAV, VFAL…VKWF, FWFA…GTIF, LLPA…IELV, IGLF…WNAY, LGVP…ALSS, YAGI…NYLV, FEIV…FIMV, APFT…LMAF, and TYTI…WFGV.

The protein belongs to the amino acid-polyamine-organocation (APC) superfamily. Amino acid transporter (AAT) (TC 2.A.3.1) family.

Its subcellular location is the cell inner membrane. The polypeptide is L-asparagine permease (ansP) (Salmonella typhimurium (strain LT2 / SGSC1412 / ATCC 700720)).